The following is a 523-amino-acid chain: 2-isopropylmalate synthase (523 aa).

The 263-residue stretch at Val5–His267 folds into the Pyruvate carboxyltransferase domain. 4 residues coordinate Mn(2+): Asp14, His202, His204, and Asn238. A regulatory domain region spans residues Lys392–Val523.

This sequence belongs to the alpha-IPM synthase/homocitrate synthase family. LeuA type 1 subfamily. Homodimer. It depends on Mn(2+) as a cofactor.

It is found in the cytoplasm. It carries out the reaction 3-methyl-2-oxobutanoate + acetyl-CoA + H2O = (2S)-2-isopropylmalate + CoA + H(+). It functions in the pathway amino-acid biosynthesis; L-leucine biosynthesis; L-leucine from 3-methyl-2-oxobutanoate: step 1/4. Catalyzes the condensation of the acetyl group of acetyl-CoA with 3-methyl-2-oxobutanoate (2-ketoisovalerate) to form 3-carboxy-3-hydroxy-4-methylpentanoate (2-isopropylmalate). This is 2-isopropylmalate synthase from Shewanella piezotolerans (strain WP3 / JCM 13877).